Consider the following 305-residue polypeptide: Aspartate carbamoyltransferase catalytic subunit (305 aa).

Arginine 54 and threonine 55 together coordinate carbamoyl phosphate. Residue lysine 82 coordinates L-aspartate. Arginine 104, histidine 132, and glutamine 135 together coordinate carbamoyl phosphate. L-aspartate-binding residues include arginine 165 and arginine 218. Residues glycine 259 and proline 260 each coordinate carbamoyl phosphate.

It belongs to the aspartate/ornithine carbamoyltransferase superfamily. ATCase family. Heterododecamer (2C3:3R2) of six catalytic PyrB chains organized as two trimers (C3), and six regulatory PyrI chains organized as three dimers (R2).

The catalysed reaction is carbamoyl phosphate + L-aspartate = N-carbamoyl-L-aspartate + phosphate + H(+). Its pathway is pyrimidine metabolism; UMP biosynthesis via de novo pathway; (S)-dihydroorotate from bicarbonate: step 2/3. Catalyzes the condensation of carbamoyl phosphate and aspartate to form carbamoyl aspartate and inorganic phosphate, the committed step in the de novo pyrimidine nucleotide biosynthesis pathway. The protein is Aspartate carbamoyltransferase catalytic subunit of Caldicellulosiruptor bescii (strain ATCC BAA-1888 / DSM 6725 / KCTC 15123 / Z-1320) (Anaerocellum thermophilum).